The primary structure comprises 288 residues: Store-operated calcium entry regulator STIMATE (288 aa).

At 1-28 (MQGPGGNVSRGLPGGPASTVASGAGRCE) the chain is on the cytoplasmic side. 3 helical membrane passes run 29-49 (SGALMHSFGIFLQGLLGVVAF), 69-89 (IWFLDTSKQAIGMLFIHFANV), and 102-122 (LYLINFLLDATVGMLLIYVGV). Positions 149–153 (GAWVG) match the GXXXG motif motif. Helical transmembrane passes span 156 to 176 (ALYIVIMIFEKSVVFIVLLIL) and 194 to 214 (LAIVMLIVPFFVNAFMFWVVD). Over 215–288 (NFLMRKGKTK…KKKHRFGLPV (74 aa)) the chain is Cytoplasmic. Positions 228 to 288 (EERGANQDSR…KKKHRFGLPV (61 aa)) are disordered. Residues 241-246 (KVRYRR) are required for localization in the endoplasmic reticulum. Residues 261 to 272 (ADDEMEESDAEE) are compositionally biased toward acidic residues. A compositionally biased stretch (basic residues) spans 277–288 (PVKKKHRFGLPV).

It belongs to the STIMATE family. In terms of assembly, homooligomer. Interacts with STIM1.

The protein resides in the endoplasmic reticulum membrane. Functionally, acts as a regulator of store-operated Ca(2+) entry (SOCE) at junctional sites that connect the endoplasmic reticulum (ER) and plasma membrane (PM), called ER-plasma membrane (ER-PM) junction or cortical ER. SOCE is a Ca(2+) influx following depletion of intracellular Ca(2+) stores. Acts by interacting with STIM1, promoting STIM1 conformational switch. Involved in STIM1 relocalization to ER-PM junctions. Contributes to the maintenance and reorganization of store-dependent ER-PM junctions. The sequence is that of Store-operated calcium entry regulator STIMATE from Rattus norvegicus (Rat).